Reading from the N-terminus, the 235-residue chain is 1-(5-phosphoribosyl)-5-[(5-phosphoribosylamino)methylideneamino] imidazole-4-carboxamide isomerase (235 aa).

D8 acts as the Proton acceptor in catalysis. The active-site Proton donor is the D127.

The protein belongs to the HisA/HisF family.

Its subcellular location is the cytoplasm. The enzyme catalyses 1-(5-phospho-beta-D-ribosyl)-5-[(5-phospho-beta-D-ribosylamino)methylideneamino]imidazole-4-carboxamide = 5-[(5-phospho-1-deoxy-D-ribulos-1-ylimino)methylamino]-1-(5-phospho-beta-D-ribosyl)imidazole-4-carboxamide. It participates in amino-acid biosynthesis; L-histidine biosynthesis; L-histidine from 5-phospho-alpha-D-ribose 1-diphosphate: step 4/9. The protein is 1-(5-phosphoribosyl)-5-[(5-phosphoribosylamino)methylideneamino] imidazole-4-carboxamide isomerase of Nautilia profundicola (strain ATCC BAA-1463 / DSM 18972 / AmH).